The sequence spans 683 residues: Long-chain-fatty-acid--CoA ligase 5 (683 aa).

A helical; Signal-anchor for type III membrane protein membrane pass occupies residues 12–32 (LPTPALICLLTFGTAIFLWLI). Residues 33-683 (NRPQPVLPLI…IKSLYESIEE (651 aa)) lie on the Cytoplasmic side of the membrane. Position 361 is an N6-acetyllysine (Lys-361).

This sequence belongs to the ATP-dependent AMP-binding enzyme family.

The protein localises to the mitochondrion. The protein resides in the endoplasmic reticulum. Its subcellular location is the mitochondrion outer membrane. It localises to the endoplasmic reticulum membrane. It is found in the cell membrane. It carries out the reaction a long-chain fatty acid + ATP + CoA = a long-chain fatty acyl-CoA + AMP + diphosphate. The catalysed reaction is (5Z,8Z,11Z,14Z)-eicosatetraenoate + ATP + CoA = (5Z,8Z,11Z,14Z)-eicosatetraenoyl-CoA + AMP + diphosphate. The enzyme catalyses hexadecanoate + ATP + CoA = hexadecanoyl-CoA + AMP + diphosphate. It catalyses the reaction (E)-hexadec-2-enoate + ATP + CoA = (2E)-hexadecenoyl-CoA + AMP + diphosphate. It carries out the reaction 15-hydroxy-(5Z,8Z,11Z,13E)-eicosatetraenoate + ATP + CoA = 15-hydroxy-(5Z,8Z,11Z,13E)-eicosatetraenoyl-CoA + AMP + diphosphate. The catalysed reaction is 12-hydroxy-(5Z,8Z,10E,14Z)-eicosatetraenoate + ATP + CoA = 12-hydroxy-(5Z,8Z,10E,14Z)-eicosatetraenoyl-CoA + AMP + diphosphate. The enzyme catalyses 5-hydroxy-(6E,8Z,11Z,14Z)-eicosatetraenoate + ATP + CoA = 5-hydroxy-(6E,8Z,11Z,14Z)-eicosatetraenoyl-CoA + AMP + diphosphate. It catalyses the reaction 14,15-epoxy-(5Z,8Z,11Z)-eicosatrienoate + ATP + CoA = 14,15-epoxy-(5Z,8Z,11Z)-eicosatrienoyl-CoA + AMP + diphosphate. It carries out the reaction 11,12-epoxy-(5Z,8Z,14Z)-eicosatrienoate + ATP + CoA = 11,12-epoxy-(5Z,8Z,14Z)-eicosatrienoyl-CoA + AMP + diphosphate. The catalysed reaction is (9Z)-octadecenoate + ATP + CoA = (9Z)-octadecenoyl-CoA + AMP + diphosphate. Functionally, catalyzes the conversion of long-chain fatty acids to their active form acyl-CoAs for both synthesis of cellular lipids, and degradation via beta-oxidation. ACSL5 may activate fatty acids from exogenous sources for the synthesis of triacylglycerol destined for intracellular storage. It was suggested that it may also stimulate fatty acid oxidation. At the villus tip of the crypt-villus axis of the small intestine may sensitize epithelial cells to apoptosis specifically triggered by the death ligand TRAIL. May have a role in the survival of glioma cells. Utilizes a wide range of saturated fatty acids with a preference for C16-C18 unsaturated fatty acids. The chain is Long-chain-fatty-acid--CoA ligase 5 from Mus musculus (Mouse).